A 213-amino-acid chain; its full sequence is High frequency lysogenization protein HflD homolog (213 aa).

Positions 79–122 (QGLNAELTRYTLSLMVLERKLSSAKGALNTLGDRINGLQRQLDH) form a coiled coil.

It belongs to the HflD family.

It localises to the cytoplasm. Its subcellular location is the cell inner membrane. The chain is High frequency lysogenization protein HflD homolog from Salmonella agona (strain SL483).